We begin with the raw amino-acid sequence, 336 residues long: tRNA N6-adenosine threonylcarbamoyltransferase (336 aa).

The Fe cation site is built by H112 and H116. Residues 136-140 (LVSGG), D169, G182, and N276 each bind substrate. Position 304 (D304) interacts with Fe cation.

Belongs to the KAE1 / TsaD family. Fe(2+) serves as cofactor.

It is found in the cytoplasm. It carries out the reaction L-threonylcarbamoyladenylate + adenosine(37) in tRNA = N(6)-L-threonylcarbamoyladenosine(37) in tRNA + AMP + H(+). Functionally, required for the formation of a threonylcarbamoyl group on adenosine at position 37 (t(6)A37) in tRNAs that read codons beginning with adenine. Is involved in the transfer of the threonylcarbamoyl moiety of threonylcarbamoyl-AMP (TC-AMP) to the N6 group of A37, together with TsaE and TsaB. TsaD likely plays a direct catalytic role in this reaction. This is tRNA N6-adenosine threonylcarbamoyltransferase from Francisella tularensis subsp. holarctica (strain LVS).